We begin with the raw amino-acid sequence, 463 residues long: Methionine aminopeptidase 2-2 (463 aa).

Positions 1-107 (MGAKTFEGGD…VPLSQLFPDG (107 aa)) are disordered. Residues 37-53 (EDGDGEFGTDDDDDGDG) are compositionally biased toward acidic residues. Basic residues predominate over residues 69–83 (PKKRKRSKKKKSNKK). His-215 contributes to the substrate binding site. Residues Asp-236, Asp-247, and His-316 each contribute to the a divalent metal cation site. His-324 provides a ligand contact to substrate. Residues Glu-349 and Glu-444 each contribute to the a divalent metal cation site.

Belongs to the peptidase M24A family. Methionine aminopeptidase eukaryotic type 2 subfamily. Co(2+) serves as cofactor. Requires Zn(2+) as cofactor. It depends on Mn(2+) as a cofactor. The cofactor is Fe(2+).

It is found in the cytoplasm. It catalyses the reaction Release of N-terminal amino acids, preferentially methionine, from peptides and arylamides.. Functionally, cotranslationally removes the N-terminal methionine from nascent proteins. The N-terminal methionine is often cleaved when the second residue in the primary sequence is small and uncharged (Met-Ala-, Cys, Gly, Pro, Ser, Thr, or Val). In Talaromyces marneffei (strain ATCC 18224 / CBS 334.59 / QM 7333) (Penicillium marneffei), this protein is Methionine aminopeptidase 2-2.